The chain runs to 362 residues: 3-dehydroquinate synthase (362 aa).

Residues 71–76 (DGEQYK), 105–109 (GVVGD), 129–130 (TT), K142, K151, and 169–172 (CLKT) contribute to the NAD(+) site. Residues E184, H247, and H264 each coordinate Zn(2+).

The protein belongs to the sugar phosphate cyclases superfamily. Dehydroquinate synthase family. The cofactor is NAD(+). Requires Co(2+) as cofactor. Zn(2+) is required as a cofactor.

It is found in the cytoplasm. It catalyses the reaction 7-phospho-2-dehydro-3-deoxy-D-arabino-heptonate = 3-dehydroquinate + phosphate. It participates in metabolic intermediate biosynthesis; chorismate biosynthesis; chorismate from D-erythrose 4-phosphate and phosphoenolpyruvate: step 2/7. Its function is as follows. Catalyzes the conversion of 3-deoxy-D-arabino-heptulosonate 7-phosphate (DAHP) to dehydroquinate (DHQ). This is 3-dehydroquinate synthase from Shigella flexneri.